The following is a 55-amino-acid chain: Large ribosomal subunit protein bL33 (55 aa).

The protein belongs to the bacterial ribosomal protein bL33 family.

The sequence is that of Large ribosomal subunit protein bL33 from Erythrobacter litoralis (strain HTCC2594).